The chain runs to 230 residues: Orotidine 5'-phosphate decarboxylase (230 aa).

Substrate is bound by residues aspartate 11, lysine 34, 61–70 (DLKLHDIPNT), threonine 117, arginine 179, glutamine 188, glycine 208, and arginine 209. The active-site Proton donor is lysine 63.

It belongs to the OMP decarboxylase family. Type 1 subfamily. Homodimer.

It carries out the reaction orotidine 5'-phosphate + H(+) = UMP + CO2. It participates in pyrimidine metabolism; UMP biosynthesis via de novo pathway; UMP from orotate: step 2/2. Catalyzes the decarboxylation of orotidine 5'-monophosphate (OMP) to uridine 5'-monophosphate (UMP). The protein is Orotidine 5'-phosphate decarboxylase of Streptococcus pyogenes serotype M49 (strain NZ131).